A 914-amino-acid polypeptide reads, in one-letter code: Ral guanine nucleotide dissociation stimulator (914 aa).

The N-terminal Ras-GEF domain maps to 112–249 (KVRTVKAGTL…RAHLLLAQLE (138 aa)). Positions 280–365 (ARAPSPVPAP…APVPSLQPSW (86 aa)) are disordered. The span at 282 to 300 (APSPVPAPAPEPEPAPTPA) shows a compositional bias: pro residues. Positions 304–338 (ELEVAPAPAPELQQAPEPAVGLESAPAPALELEPA) are enriched in low complexity. A Ras-GEF domain is found at 386–648 (PPDLVAEQFT…YNLSCELEPP (263 aa)). Disordered regions lie at residues 666–689 (KRWS…SKSC) and 728–776 (PESP…RTHK). 2 stretches are compositionally biased toward low complexity: residues 675–686 (STELSTSGSSHS) and 745–772 (SSPE…VAAT). In terms of domain architecture, Ras-associating spans 798-885 (DCCIIRVSLD…YDFVLKKRTF (88 aa)). Position 814 is a phosphotyrosine; by MET (Y814).

As to quaternary structure, interacts with RIT1 and RIT2. Interacts with OOG1. Interacts with TRAF3. Interacts with HRAS. In terms of processing, phosphorylation of Tyr-814 by MET blocks HRAS binding.

The protein localises to the cytoplasm. Its subcellular location is the nucleus. In terms of biological role, functions as a guanine nucleotide exchange factor (GEF) activating either RalA or RalB GTPases and plays an important role in intracellular transport. Interacts and acts as an effector molecule for R-Ras, H-Ras, K-Ras, and Rap. During bacterial clearance, recognizes 'Lys-33'-linked polyubiquitinated TRAF3 and subsequently mediates assembly of the exocyst complex. The sequence is that of Ral guanine nucleotide dissociation stimulator (RALGDS) from Homo sapiens (Human).